The following is a 210-amino-acid chain: Thymidylate kinase (210 aa).

11–18 (GVDGAGKT) contributes to the ATP binding site.

Belongs to the thymidylate kinase family.

It carries out the reaction dTMP + ATP = dTDP + ADP. Its function is as follows. Phosphorylation of dTMP to form dTDP in both de novo and salvage pathways of dTTP synthesis. This Mycoplasma genitalium (strain ATCC 33530 / DSM 19775 / NCTC 10195 / G37) (Mycoplasmoides genitalium) protein is Thymidylate kinase (tmk).